Reading from the N-terminus, the 193-residue chain is Iron-sulfur flavoprotein MJ1083 (193 aa).

[4Fe-4S] cluster is bound by residues cysteine 47, cysteine 50, cysteine 53, and cysteine 59.

The protein belongs to the SsuE family. Isf subfamily. As to quaternary structure, homodimer. Requires FMN as cofactor. [4Fe-4S] cluster is required as a cofactor.

In terms of biological role, redox-active protein probably involved in electron transport. This chain is Iron-sulfur flavoprotein MJ1083, found in Methanocaldococcus jannaschii (strain ATCC 43067 / DSM 2661 / JAL-1 / JCM 10045 / NBRC 100440) (Methanococcus jannaschii).